The primary structure comprises 688 residues: Elongation factor G (688 aa).

One can recognise a tr-type G domain in the interval 8–282 (EKTRNIGIIA…AIVDYLPAPC (275 aa)). GTP is bound by residues 17–24 (AHIDAGKT), 81–85 (DTPGH), and 135–138 (NKMD).

It belongs to the TRAFAC class translation factor GTPase superfamily. Classic translation factor GTPase family. EF-G/EF-2 subfamily.

It is found in the cytoplasm. Functionally, catalyzes the GTP-dependent ribosomal translocation step during translation elongation. During this step, the ribosome changes from the pre-translocational (PRE) to the post-translocational (POST) state as the newly formed A-site-bound peptidyl-tRNA and P-site-bound deacylated tRNA move to the P and E sites, respectively. Catalyzes the coordinated movement of the two tRNA molecules, the mRNA and conformational changes in the ribosome. The sequence is that of Elongation factor G from Onion yellows phytoplasma (strain OY-M).